The sequence spans 67 residues: Alpha-toxin Bu1 (67 aa).

The LCN-type CS-alpha/beta domain maps to 3-65 (RDAYIADDKN…VPIRIPGRCR (63 aa)). 4 disulfides stabilise this stretch: cysteine 13–cysteine 64, cysteine 17–cysteine 37, cysteine 23–cysteine 47, and cysteine 27–cysteine 49. Arginine 65 is subject to Arginine amide.

This sequence belongs to the long (4 C-C) scorpion toxin superfamily. Sodium channel inhibitor family. Alpha subfamily. In terms of tissue distribution, expressed by the venom gland.

It localises to the secreted. Functionally, alpha toxins bind voltage-independently at site-3 of sodium channels (Nav) and inhibit the inactivation of the activated channels, thereby blocking neuronal transmission. Since the experiments have been done on F11 cells (immortalized cell line derived from rat DRG neurons mainly expressing Nav1.3/SCN3A, but also Nav1.7/SCN9A and Nav1.2/SCN2A), it is supposed to act on these channels. The slow of inactivation process is partially reversible. Is lethal to mice. This Buthacus macrocentrus (Turkish scorpion) protein is Alpha-toxin Bu1.